Consider the following 211-residue polypeptide: Imidazole glycerol phosphate synthase subunit HisH (211 aa).

The 209-residue stretch at 3–211 (VVAVIDYEMG…VSQVREKIAA (209 aa)) folds into the Glutamine amidotransferase type-1 domain. Cys-81 serves as the catalytic Nucleophile. Active-site residues include His-186 and Glu-188.

In terms of assembly, heterodimer of HisH and HisF.

The protein localises to the cytoplasm. The enzyme catalyses 5-[(5-phospho-1-deoxy-D-ribulos-1-ylimino)methylamino]-1-(5-phospho-beta-D-ribosyl)imidazole-4-carboxamide + L-glutamine = D-erythro-1-(imidazol-4-yl)glycerol 3-phosphate + 5-amino-1-(5-phospho-beta-D-ribosyl)imidazole-4-carboxamide + L-glutamate + H(+). It carries out the reaction L-glutamine + H2O = L-glutamate + NH4(+). It participates in amino-acid biosynthesis; L-histidine biosynthesis; L-histidine from 5-phospho-alpha-D-ribose 1-diphosphate: step 5/9. Functionally, IGPS catalyzes the conversion of PRFAR and glutamine to IGP, AICAR and glutamate. The HisH subunit catalyzes the hydrolysis of glutamine to glutamate and ammonia as part of the synthesis of IGP and AICAR. The resulting ammonia molecule is channeled to the active site of HisF. The protein is Imidazole glycerol phosphate synthase subunit HisH of Trichormus variabilis (strain ATCC 29413 / PCC 7937) (Anabaena variabilis).